Reading from the N-terminus, the 368-residue chain is tRNA 2-selenouridine synthase (368 aa).

One can recognise a Rhodanese domain in the interval 15–138 (FLNQHPIMDV…MRQYLIGVIE (124 aa)). The active-site S-selanylcysteine intermediate is cysteine 98.

It belongs to the SelU family. Monomer.

It catalyses the reaction 5-methylaminomethyl-2-thiouridine(34) in tRNA + selenophosphate + (2E)-geranyl diphosphate + H2O + H(+) = 5-methylaminomethyl-2-selenouridine(34) in tRNA + (2E)-thiogeraniol + phosphate + diphosphate. The enzyme catalyses 5-methylaminomethyl-2-thiouridine(34) in tRNA + (2E)-geranyl diphosphate = 5-methylaminomethyl-S-(2E)-geranyl-thiouridine(34) in tRNA + diphosphate. It carries out the reaction 5-methylaminomethyl-S-(2E)-geranyl-thiouridine(34) in tRNA + selenophosphate + H(+) = 5-methylaminomethyl-2-(Se-phospho)selenouridine(34) in tRNA + (2E)-thiogeraniol. The catalysed reaction is 5-methylaminomethyl-2-(Se-phospho)selenouridine(34) in tRNA + H2O = 5-methylaminomethyl-2-selenouridine(34) in tRNA + phosphate. Functionally, involved in the post-transcriptional modification of the uridine at the wobble position (U34) of tRNA(Lys), tRNA(Glu) and tRNA(Gln). Catalyzes the conversion of 2-thiouridine (S2U-RNA) to 2-selenouridine (Se2U-RNA). Acts in a two-step process involving geranylation of 2-thiouridine (S2U) to S-geranyl-2-thiouridine (geS2U) and subsequent selenation of the latter derivative to 2-selenouridine (Se2U) in the tRNA chain. The polypeptide is tRNA 2-selenouridine synthase (Shewanella baltica (strain OS185)).